Here is a 489-residue protein sequence, read N- to C-terminus: Sphingolipid C9-methyltransferase (489 aa).

2 helical membrane passes run 29–49 (GAKNFSNWLLLGLLTGVPLFV) and 59–79 (TFIFFFILFAIPILMAYWTVL). S-adenosyl-L-methionine is bound by residues 202–203 (YT), 239–247 (LLDLGCGWG), 265–270 (TLGKNQ), and 295–296 (YR).

The protein belongs to the CFA/CMAS family.

It is found in the membrane. It catalyses the reaction a (4E,8E)-4-sphinga-4,8-dienine ceramide + S-adenosyl-L-methionine = a 9-methyl-(4E,8E)-sphinga-4,8-dienine ceramide + S-adenosyl-L-homocysteine + H(+). The protein operates within lipid metabolism; sphingolipid metabolism. Its function is as follows. Catalyzes methylation of the sphingoid base component of glucosylceramides (GluCers) at the C9-position. Sphingolipid C9-methylation requires 4,8-desaturated ceramides as substrates. Glucosylceramides play important roles in growth, differentiation and pathogenicity. The methyl group at the C9-position distinguishes fungal glucosylceramides from those of plants and animals, and may thus play a role in host-pathogen interactions enabling the host to recognize the fungal attack and initiate specific defense responses. This Komagataella phaffii (strain GS115 / ATCC 20864) (Yeast) protein is Sphingolipid C9-methyltransferase.